The sequence spans 296 residues: m7GpppN-mRNA hydrolase NUDT17 (296 aa).

The 147-residue stretch at Gly90–Pro236 folds into the Nudix hydrolase domain. A Nudix box motif is present at residues Gly129–Gly150. Positions 144 and 148 each coordinate Mg(2+).

Belongs to the Nudix hydrolase family. Mg(2+) serves as cofactor. It depends on Mn(2+) as a cofactor.

The catalysed reaction is a 5'-end (N(7)-methyl 5'-triphosphoguanosine)-ribonucleoside in mRNA + H2O = N(7)-methyl-GDP + a 5'-end phospho-ribonucleoside in mRNA + 2 H(+). In terms of biological role, acts as a decapping enzyme capable of hydrolyzing monomethylated capped RNAs (in vitro). Hydrolyzes monomethylated capped RNA after alpha and beta phosphates to form N(7)-methyl-GDP. Shows low activity towards unmethylated capped RNA. This chain is m7GpppN-mRNA hydrolase NUDT17 (nudt17), found in Xenopus laevis (African clawed frog).